A 546-amino-acid chain; its full sequence is Probable protein kinase UbiB (546 aa).

The region spanning 124–502 (DFDIKPLASA…HVRQGQSRYL (379 aa)) is the Protein kinase domain. ATP is bound by residues 130 to 138 (LASASIAQV) and Lys-153. Residue Asp-288 is the Proton acceptor of the active site. Transmembrane regions (helical) follow at residues 501–521 (YLLG…VSRP) and 522–542 (EWGL…FVGW).

It belongs to the ABC1 family. UbiB subfamily.

The protein localises to the cell inner membrane. It functions in the pathway cofactor biosynthesis; ubiquinone biosynthesis [regulation]. In terms of biological role, is probably a protein kinase regulator of UbiI activity which is involved in aerobic coenzyme Q (ubiquinone) biosynthesis. In Escherichia fergusonii (strain ATCC 35469 / DSM 13698 / CCUG 18766 / IAM 14443 / JCM 21226 / LMG 7866 / NBRC 102419 / NCTC 12128 / CDC 0568-73), this protein is Probable protein kinase UbiB.